Reading from the N-terminus, the 249-residue chain is Isoamyl acetate-hydrolyzing esterase 1 homolog (249 aa).

Ser24 acts as the Nucleophile in catalysis. The residue at position 63 (Lys63) is an N6-succinyllysine. Asp197 acts as the Proton donor in catalysis. His200 acts as the Proton acceptor in catalysis.

This sequence belongs to the 'GDSL' lipolytic enzyme family. IAH1 subfamily.

In terms of biological role, probable lipase. The polypeptide is Isoamyl acetate-hydrolyzing esterase 1 homolog (Iah1) (Rattus norvegicus (Rat)).